Here is a 190-residue protein sequence, read N- to C-terminus: dCTP deaminase (190 aa).

Residue 113-118 participates in dCTP binding; sequence KSTYAR. Residue Glu139 is the Proton donor/acceptor of the active site. Gln158, Tyr172, Lys181, and Gln182 together coordinate dCTP.

This sequence belongs to the dCTP deaminase family. As to quaternary structure, homotrimer.

It carries out the reaction dCTP + H2O + H(+) = dUTP + NH4(+). It functions in the pathway pyrimidine metabolism; dUMP biosynthesis; dUMP from dCTP (dUTP route): step 1/2. Functionally, catalyzes the deamination of dCTP to dUTP. The polypeptide is dCTP deaminase (Chlamydia trachomatis serovar A (strain ATCC VR-571B / DSM 19440 / HAR-13)).